The sequence spans 312 residues: Regulation of nuclear pre-mRNA domain-containing protein 1A (312 aa).

Serine 2 bears the N-acetylserine mark. In terms of domain architecture, CID spans 2-133 (SAFSEAALEK…QLKHALYGDK (132 aa)). Residues serine 153, serine 156, and serine 285 each carry the phosphoserine modification. The stretch at 244 to 286 (LADFLRCQKEALAEKEHKLEEYKRKLARVSLVRKELRARIQSL) forms a coiled coil.

The protein belongs to the UPF0400 (RTT103) family. As to quaternary structure, may form a heterodimer with RPRD1B. Associates with the RNA polymerase II subunit POLR2A (via CTD phosphorylated at 'Ser-2' and 'Ser-7' of the heptad repeats).

The protein resides in the nucleus. Its function is as follows. Interacts with phosphorylated C-terminal heptapeptide repeat domain (CTD) of the largest RNA polymerase II subunit POLR2A, and participates in dephosphorylation of the CTD by RPAP2. May act as a negative regulator of cyclin-D1 (CCND1) and cyclin-E (CCNE1) in the cell cycle. The chain is Regulation of nuclear pre-mRNA domain-containing protein 1A (Rprd1a) from Mus musculus (Mouse).